A 493-amino-acid chain; its full sequence is Probable cytosol aminopeptidase (493 aa).

Mn(2+)-binding residues include Lys-257 and Asp-262. Residue Lys-269 is part of the active site. Mn(2+)-binding residues include Asp-281, Asp-341, and Glu-343. Arg-345 is a catalytic residue.

The protein belongs to the peptidase M17 family. The cofactor is Mn(2+).

The protein resides in the cytoplasm. The enzyme catalyses Release of an N-terminal amino acid, Xaa-|-Yaa-, in which Xaa is preferably Leu, but may be other amino acids including Pro although not Arg or Lys, and Yaa may be Pro. Amino acid amides and methyl esters are also readily hydrolyzed, but rates on arylamides are exceedingly low.. The catalysed reaction is Release of an N-terminal amino acid, preferentially leucine, but not glutamic or aspartic acids.. Functionally, presumably involved in the processing and regular turnover of intracellular proteins. Catalyzes the removal of unsubstituted N-terminal amino acids from various peptides. The polypeptide is Probable cytosol aminopeptidase (Synechococcus sp. (strain WH7803)).